Here is a 736-residue protein sequence, read N- to C-terminus: Alpha-xylosidase A (736 aa).

Positions 1 to 18 are cleaved as a signal peptide; that stretch reads MYFSSFLALGALVQAAAA. N-linked (GlcNAc...) asparagine glycans are attached at residues Asn-24, Asn-279, Asn-332, and Asn-376. Residue Asp-413 is part of the active site. An N-linked (GlcNAc...) asparagine glycan is attached at Asn-471. Asp-505 (proton donor) is an active-site residue. Asn-655, Asn-676, Asn-690, and Asn-701 each carry an N-linked (GlcNAc...) asparagine glycan.

The protein belongs to the glycosyl hydrolase 31 family.

The protein localises to the secreted. It catalyses the reaction Hydrolysis of terminal, non-reducing alpha-D-xylose residues with release of alpha-D-xylose.. Its function is as follows. Catalyzes the liberation of alpha-xylose from the non-reducing terminal glucose of xyloglucan oligosaccharides. This chain is Alpha-xylosidase A, found in Aspergillus niger (strain ATCC MYA-4892 / CBS 513.88 / FGSC A1513).